The sequence spans 562 residues: Endochitinase (562 aa).

The first 20 residues, 1–20 (MSLLYIILLFTQFLLLPTDA), serve as a signal peptide directing secretion. Residues 27-311 (TNIAVYWGQN…EILKNLLTSA (285 aa)) form the GH18 domain. The active-site Proton donor is the E157. Disordered stretches follow at residues 329-358 (TSSA…SKVT) and 461-484 (TLSP…SDST). The tract at residues 481-562 (SDSTARTLAK…NFSYLESNYF (82 aa)) is chitin-binding, high affinity. N-linked (GlcNAc...) asparagine glycosylation is present at N553.

Belongs to the glycosyl hydrolase 18 family. Chitinase class V subfamily. In terms of processing, extensively glycosylated with a series of short O-linked mannose oligosaccharides ranging in size from Man(2) to Man(5).

It localises to the secreted. Its subcellular location is the cell wall. It catalyses the reaction Random endo-hydrolysis of N-acetyl-beta-D-glucosaminide (1-&gt;4)-beta-linkages in chitin and chitodextrins.. Functionally, chitinase is required for cell separation during growth of S.cerevisiae. The protein is Endochitinase (CTS1) of Saccharomyces cerevisiae (strain ATCC 204508 / S288c) (Baker's yeast).